The chain runs to 586 residues: Chaperonin 60 subunit alpha 1, chloroplastic (586 aa).

The N-terminal 46 residues, 1–46, are a transit peptide targeting the chloroplast; sequence MASANALSSASVLCSSRQSKLGGGNQQQGQRVSYNKRTIRRFSVRA. S90 bears the Phosphoserine mark.

Belongs to the chaperonin (HSP60) family. In terms of assembly, part of the Cpn60 complex composed of 7 alpha and 7 beta subunits. This complex shows ATPase activity. The Cpn60 complex interacts with the Cpn10 complex. Expressed in leaves, stems, siliques and flowers.

Its subcellular location is the plastid. The protein localises to the chloroplast. Its function is as follows. Binds RuBisCO small and large subunits and is implicated in the assembly of the enzyme oligomer. Involved in protein assisted folding. Required for proper chloroplast development. This Arabidopsis thaliana (Mouse-ear cress) protein is Chaperonin 60 subunit alpha 1, chloroplastic (CPN60A1).